Consider the following 139-residue polypeptide: Holo-[acyl-carrier-protein] synthase (139 aa).

Mg(2+)-binding residues include D8 and E61.

This sequence belongs to the P-Pant transferase superfamily. AcpS family. The cofactor is Mg(2+).

The protein localises to the cytoplasm. It carries out the reaction apo-[ACP] + CoA = holo-[ACP] + adenosine 3',5'-bisphosphate + H(+). Functionally, transfers the 4'-phosphopantetheine moiety from coenzyme A to a Ser of acyl-carrier-protein. The polypeptide is Holo-[acyl-carrier-protein] synthase (Nitrobacter hamburgensis (strain DSM 10229 / NCIMB 13809 / X14)).